Consider the following 101-residue polypeptide: NADH-quinone oxidoreductase subunit K (101 aa).

The next 3 helical transmembrane spans lie at 2–22 (ISLN…LVGV), 29–49 (IMLF…LVAI), and 63–83 (MFII…LILW).

Belongs to the complex I subunit 4L family. As to quaternary structure, NDH-1 is composed of 14 different subunits. Subunits NuoA, H, J, K, L, M, N constitute the membrane sector of the complex.

The protein localises to the cell inner membrane. It catalyses the reaction a quinone + NADH + 5 H(+)(in) = a quinol + NAD(+) + 4 H(+)(out). In terms of biological role, NDH-1 shuttles electrons from NADH, via FMN and iron-sulfur (Fe-S) centers, to quinones in the respiratory chain. The immediate electron acceptor for the enzyme in this species is believed to be ubiquinone. Couples the redox reaction to proton translocation (for every two electrons transferred, four hydrogen ions are translocated across the cytoplasmic membrane), and thus conserves the redox energy in a proton gradient. The sequence is that of NADH-quinone oxidoreductase subunit K from Campylobacter hominis (strain ATCC BAA-381 / DSM 21671 / CCUG 45161 / LMG 19568 / NCTC 13146 / CH001A).